Here is a 111-residue protein sequence, read N- to C-terminus: Cell cycle protein GpsB (111 aa).

Residues 34-72 (LDMIIKDYEVFHKELEQLQQQNARLKRELEEQKLAAAQA) adopt a coiled-coil conformation.

Belongs to the GpsB family. As to quaternary structure, forms polymers through the coiled coil domains. Interacts with PBP1, MreC and EzrA.

Its subcellular location is the cytoplasm. In terms of biological role, divisome component that associates with the complex late in its assembly, after the Z-ring is formed, and is dependent on DivIC and PBP2B for its recruitment to the divisome. Together with EzrA, is a key component of the system that regulates PBP1 localization during cell cycle progression. Its main role could be the removal of PBP1 from the cell pole after pole maturation is completed. Also contributes to the recruitment of PBP1 to the division complex. Not essential for septum formation. This chain is Cell cycle protein GpsB, found in Bacillus cytotoxicus (strain DSM 22905 / CIP 110041 / 391-98 / NVH 391-98).